Reading from the N-terminus, the 164-residue chain is Large ribosomal subunit protein uL10 (164 aa).

It belongs to the universal ribosomal protein uL10 family. As to quaternary structure, part of the ribosomal stalk of the 50S ribosomal subunit. The N-terminus interacts with L11 and the large rRNA to form the base of the stalk. The C-terminus forms an elongated spine to which L12 dimers bind in a sequential fashion forming a multimeric L10(L12)X complex.

Functionally, forms part of the ribosomal stalk, playing a central role in the interaction of the ribosome with GTP-bound translation factors. In Helicobacter pylori (strain HPAG1), this protein is Large ribosomal subunit protein uL10.